Consider the following 438-residue polypeptide: MIINRLFIIIVLFFVNVNSKIISESTLNSCQGGTIQIAESIPLGLDISTNLSTHDAWMDLITNAQESIDLGFFYFTLLGGSDLDPVYGGQLGIDIFNAIVEAHSRGINVRIVQNEPSESFPDTETQTLAKLGIQVRSIDWVSLVGSGVLHTKLIIIDESSAYVGSANADWSSLAQVKELGIVLKNCPTMVADTEIAFQQYWNAADFTSLPINDWGSNYQALFNNTNMASLSLNNNNNNNNKNKNNDNDGSGTNQMYEMFLAVSPPQFQSTYRTGDIDALMDAINNADQSICITVMDYTPTTLYNDPNTYWPLIDNALRAAAFNRNVQVRMLISHWNYTSPIIPQWLHSLNQVDNIQVRWFVVPDFSTNPQIPYTRVNHAKFMVTEKQSYVGTSNWSQDYFTVTGGLSYNVFNNDFTNQLQSIFNRDWNSPYTQPIQNF.

The first 19 residues, 1–19 (MIINRLFIIIVLFFVNVNS), serve as a signal peptide directing secretion. Asparagine 50 carries an N-linked (GlcNAc...) asparagine glycan. Residues 145-172 (GSGVLHTKLIIIDESSAYVGSANADWSS) form the PLD phosphodiesterase 1 domain. Active-site residues include histidine 150, lysine 152, and aspartate 157. 3 N-linked (GlcNAc...) asparagine glycosylation sites follow: asparagine 223, asparagine 336, and asparagine 394. In terms of domain architecture, PLD phosphodiesterase 2 spans 373 to 399 (YTRVNHAKFMVTEKQSYVGTSNWSQDY).

It belongs to the phospholipase D family.

The enzyme catalyses a 1,2-diacyl-sn-glycero-3-phosphocholine + H2O = a 1,2-diacyl-sn-glycero-3-phosphate + choline + H(+). Inhibited by butan-1-ol. Hydrolyzes membrane phospholipids, such as PtdCho (phosphatidylcholine), producing the free headgroup and PtdOH (phosphatidic acid; signaling molecule on its own). In Dictyostelium discoideum (Social amoeba), this protein is Phospholipase D Y (pldY).